A 271-amino-acid polypeptide reads, in one-letter code: 4,5-DOPA dioxygenase extradiol (271 aa).

Zn(2+)-binding residues include His22, His57, His177, and His234.

This sequence belongs to the DODA-type extradiol aromatic ring-opening dioxygenase family. As to quaternary structure, monomer. Zn(2+) serves as cofactor.

It localises to the cytoplasm. It catalyses the reaction L-dopa + O2 = 4-(L-alanin-3-yl)-2-hydroxy-cis,cis-muconate 6-semialdehyde + H(+). In vitro, opens the cyclic ring of dihydroxy-phenylalanine (DOPA) between carbons 4 and 5, thus producing an unstable seco-DOPA that rearranges nonenzymatically to betalamic acid. The physiological substrate is unknown. The protein is 4,5-DOPA dioxygenase extradiol (ygiD) of Escherichia coli (strain K12).